Here is a 185-residue protein sequence, read N- to C-terminus: Large ribosomal subunit protein uL13 (185 aa).

It belongs to the universal ribosomal protein uL13 family. Part of the 50S ribosomal subunit.

In terms of biological role, this protein is one of the early assembly proteins of the 50S ribosomal subunit, although it is not seen to bind rRNA by itself. It is important during the early stages of 50S assembly. The chain is Large ribosomal subunit protein uL13 from Pyrobaculum islandicum (strain DSM 4184 / JCM 9189 / GEO3).